The following is a 161-amino-acid chain: MKSLQKGFTLIELMIVVAIIGILAAFAIPAYNDYIARSQAAEGVSLADGLKVRIAENLQDGECKGPDADPQSGVVGNEDKGKYGLAKIEGDYDASKTEAGDPNGCKVEITYGQGTAGDKISKLITGKKLVLDQLVNGSFVQGDGTDLADKFIPNAVKAKKP.

Residues 1–7 constitute a propeptide, leader sequence; that stretch reads MKSLQKG. Residue Phe-8 is modified to N-methylphenylalanine. A helical transmembrane segment spans residues 8 to 28; sequence FTLIELMIVVAIIGILAAFAI. Cys-63 and Cys-105 are disulfide-bonded.

This sequence belongs to the N-Me-Phe pilin family. In terms of assembly, the pili are polar flexible filaments of about 5.4 nanometers diameter and 2.5 micrometers average length; they consist of only a single polypeptide chain arranged in a helical configuration of five subunits per turn in the assembled pilus.

It localises to the fimbrium. It is found in the membrane. Major component of the type IV fimbriae that plays an essential role in twitching motility, natural transformation, and protease secretion. The sequence is that of Type IV major fimbrial protein FimA (fimA) from Dichelobacter nodosus (Bacteroides nodosus).